The chain runs to 553 residues: Transcriptional regulator HilA (553 aa).

A DNA-binding region (ompR/PhoB-type) is located at residues 11–107 (NKKFVFDDFI…LYGQGYRFNR (97 aa)). A 4-aspartylphosphate modification is found at Asp62. A TPR repeat occupies 372–405 (ADIKYYYGWNLFMAGQLEEALQTINECLKLDPTR).

Functionally, the main transcriptional regulator of the Salmonella pathogenicity island 1 (SPI1) gene expression. Activates the expression of invasion genes by a direct action at their promoters and also indirectly by increasing the level of InvF. Also binds upstream of prgH and directly activates the expression of prgHIJK operon. This Salmonella typhimurium (strain LT2 / SGSC1412 / ATCC 700720) protein is Transcriptional regulator HilA (hilA).